Here is a 110-residue protein sequence, read N- to C-terminus: Probable ribonuclease HepT (110 aa).

Active-site residues include arginine 75 and histidine 80. The RX(4)HXY motif signature appears at 75–82 (RDKLIHAY). Tyrosine 82 bears the O-di-AMP-tyrosine mark.

It belongs to the HepT RNase toxin family. In terms of processing, modified by cognate antitoxin MntA; probably at least 2 successive AMPylation events occur on Tyr-82.

Functionally, toxic component of a type VII toxin-antitoxin (TA) system. Overexpression in E.coli inhibits cell growth. Neutralized by cognate antitoxin MntA. Neutralization is probably due to AMPylation by MntA. Probably an RNAase. This is Probable ribonuclease HepT from Thermococcus cleftensis (strain DSM 27260 / KACC 17922 / CL1).